Here is a 96-residue protein sequence, read N- to C-terminus: Large ribosomal subunit protein uL23 (96 aa).

Belongs to the universal ribosomal protein uL23 family. Part of the 50S ribosomal subunit. Contacts protein L29, and trigger factor when it is bound to the ribosome.

One of the early assembly proteins it binds 23S rRNA. One of the proteins that surrounds the polypeptide exit tunnel on the outside of the ribosome. Forms the main docking site for trigger factor binding to the ribosome. The chain is Large ribosomal subunit protein uL23 from Caldicellulosiruptor saccharolyticus (strain ATCC 43494 / DSM 8903 / Tp8T 6331).